We begin with the raw amino-acid sequence, 301 residues long: Heat shock factor protein HSF24 (301 aa).

A DNA-binding region spans residues 7–101 (PAPFLLKTYQ…LLTAIRRRKT (95 aa)). Disordered stretches follow at residues 103–160 (TSTP…DENE) and 221–244 (GVKD…DEKG). The span at 107-142 (AGGKSVAAGASASPDNSGDDIGSSSTSSPDSKNPGS) shows a compositional bias: low complexity. A compositionally biased stretch (acidic residues) spans 233–243 (DNDDKEDDDEK).

The protein belongs to the HSF family. As to quaternary structure, homotrimer. Exhibits temperature-dependent phosphorylation.

Its subcellular location is the nucleus. DNA-binding protein that specifically binds heat shock promoter elements (HSE) and activates transcription. In Solanum peruvianum (Peruvian tomato), this protein is Heat shock factor protein HSF24 (HSF24).